The following is a 21-amino-acid chain: Granule-bound starch synthase 1 (21 aa).

The protein belongs to the glycosyltransferase 1 family. Bacterial/plant glycogen synthase subfamily.

It is found in the plastid. The protein resides in the chloroplast. Its subcellular location is the amyloplast. It carries out the reaction an NDP-alpha-D-glucose + [(1-&gt;4)-alpha-D-glucosyl](n) = [(1-&gt;4)-alpha-D-glucosyl](n+1) + a ribonucleoside 5'-diphosphate + H(+). It functions in the pathway glycan biosynthesis; starch biosynthesis. The chain is Granule-bound starch synthase 1 from Secale cereale (Rye).